A 317-amino-acid polypeptide reads, in one-letter code: Transaldolase (317 aa).

Lysine 126 functions as the Schiff-base intermediate with substrate in the catalytic mechanism.

The protein belongs to the transaldolase family. Type 1 subfamily. In terms of assembly, homodimer.

The protein localises to the cytoplasm. It carries out the reaction D-sedoheptulose 7-phosphate + D-glyceraldehyde 3-phosphate = D-erythrose 4-phosphate + beta-D-fructose 6-phosphate. It functions in the pathway carbohydrate degradation; pentose phosphate pathway; D-glyceraldehyde 3-phosphate and beta-D-fructose 6-phosphate from D-ribose 5-phosphate and D-xylulose 5-phosphate (non-oxidative stage): step 2/3. Transaldolase is important for the balance of metabolites in the pentose-phosphate pathway. This chain is Transaldolase, found in Paraburkholderia xenovorans (strain LB400).